Consider the following 99-residue polypeptide: Large ribosomal subunit protein uL23 (99 aa).

It belongs to the universal ribosomal protein uL23 family. Part of the 50S ribosomal subunit. Contacts protein L29, and trigger factor when it is bound to the ribosome.

Functionally, one of the early assembly proteins it binds 23S rRNA. One of the proteins that surrounds the polypeptide exit tunnel on the outside of the ribosome. Forms the main docking site for trigger factor binding to the ribosome. The polypeptide is Large ribosomal subunit protein uL23 (Shewanella sediminis (strain HAW-EB3)).